The chain runs to 100 residues: Co-chaperonin GroES (100 aa).

This sequence belongs to the GroES chaperonin family. In terms of assembly, heptamer of 7 subunits arranged in a ring. Interacts with the chaperonin GroEL.

It localises to the cytoplasm. In terms of biological role, together with the chaperonin GroEL, plays an essential role in assisting protein folding. The GroEL-GroES system forms a nano-cage that allows encapsulation of the non-native substrate proteins and provides a physical environment optimized to promote and accelerate protein folding. GroES binds to the apical surface of the GroEL ring, thereby capping the opening of the GroEL channel. The sequence is that of Co-chaperonin GroES from Rhodothermus marinus (Rhodothermus obamensis).